A 349-amino-acid polypeptide reads, in one-letter code: Replication-associated protein (349 aa).

One can recognise a CRESS-DNA virus Rep endonuclease domain in the interval 8–116; that stretch reads RLNAKNYFLT…DGDTVEWGEF (109 aa). Residues 15–18 carry the RCR-1 motif; that stretch reads FLTY. Residues E49, H57, and H59 each contribute to the a divalent metal cation site. Positions 57–59 match the RCR-2 motif; sequence HLH. Catalysis depends on Y103, which acts as the For DNA cleavage activity. Residues 103–106 carry the RCR-3 motif; the sequence is YIDK. Position 107 (D107) interacts with a divalent metal cation. Residues 143–153 are binding to RBR1; it reads AEEALQIIKEE. Residues 156 to 176 are oligomerization; sequence QHFFLQFHNIVSNANRIFQTP. Residue 221-228 participates in ATP binding; the sequence is GPSRTGKT.

This sequence belongs to the geminiviridae Rep protein family. In terms of assembly, homooligomer. Interacts with the replication enhancer protein (REn). Interacts with host retinoblastoma-related protein 1 (RBR1), and may thereby induce the transcription of host replicative enzymes even if the cell is not dividing anymore. Interacts with host PCNA. Interacts with host SCE1 protein. Mg(2+) is required as a cofactor. Mn(2+) serves as cofactor.

The protein resides in the host nucleus. Essential for the replication of viral ssDNA. The closed circular ssDNA genome is first converted to a superhelical dsDNA. Rep binds a specific region at the genome origin of replication. It introduces an endonucleolytic nick within the conserved sequence 5'-TAATATTAC-3' in the intergenic region of the genome present in all geminiviruses, thereby initiating the rolling circle replication (RCR). Following cleavage, binds covalently to the 5'-phosphate of DNA as a tyrosyl ester. The cleavage gives rise to a free 3'-OH that serves as a primer for the cellular DNA polymerase. The polymerase synthesizes the (+) strand DNA by rolling circle mechanism. After one round of replication, a Rep-catalyzed nucleotidyl transfer reaction releases a circular single-stranded virus genome, thereby terminating the replication. Displays origin-specific DNA cleavage, nucleotidyl transferase, ATPase and helicase activities. In Capsicum annuum (Capsicum pepper), this protein is Replication-associated protein.